Here is a 398-residue protein sequence, read N- to C-terminus: Acetate kinase (398 aa).

A Mg(2+)-binding site is contributed by Asn8. Lys15 is a binding site for ATP. Residue Arg89 coordinates substrate. Asp146 serves as the catalytic Proton donor/acceptor. ATP is bound by residues 206–210 (HIGNG), 283–285 (DMR), and 331–335 (GMGEN). Glu383 lines the Mg(2+) pocket.

This sequence belongs to the acetokinase family. In terms of assembly, homodimer. Mg(2+) is required as a cofactor. It depends on Mn(2+) as a cofactor.

It localises to the cytoplasm. It carries out the reaction acetate + ATP = acetyl phosphate + ADP. Its pathway is metabolic intermediate biosynthesis; acetyl-CoA biosynthesis; acetyl-CoA from acetate: step 1/2. Its function is as follows. Catalyzes the formation of acetyl phosphate from acetate and ATP. Can also catalyze the reverse reaction. This Streptococcus pyogenes serotype M6 (strain ATCC BAA-946 / MGAS10394) protein is Acetate kinase.